The primary structure comprises 401 residues: Subtilisin-like protease 7 (401 aa).

Positions 1–20 are cleaved as a signal peptide; sequence MGFITKAIPLALAAASVING. The propeptide occupies 21–119; that stretch reads AEILETRAGV…IERDARVQIN (99 aa). An Inhibitor I9 domain is found at 36–118; sequence KYIVVMNDGM…YIERDARVQI (83 aa). A glycan (N-linked (GlcNAc...) asparagine) is linked at Asn58. The region spanning 129–401 is the Peptidase S8 domain; sequence SWGLARVGSR…SKLINNGSGM (273 aa). Active-site charge relay system residues include Asp161 and His193. 2 N-linked (GlcNAc...) asparagine glycosylation sites follow: Asn223 and Asn253. Catalysis depends on Ser347, which acts as the Charge relay system. An N-linked (GlcNAc...) asparagine glycan is attached at Asn397.

Belongs to the peptidase S8 family.

It is found in the secreted. Its function is as follows. Secreted subtilisin-like serine protease with keratinolytic activity that contributes to pathogenicity. The sequence is that of Subtilisin-like protease 7 (SUB7) from Trichophyton equinum (Horse ringworm fungus).